A 335-amino-acid polypeptide reads, in one-letter code: Pregnancy-specific beta-1-glycoprotein 11 (335 aa).

Positions 1–34 (MGPLSAPPCTEHIKWKGLLLTALLLNFWNLPTTA) are cleaved as a signal peptide. The region spanning 35–144 (QVMIEAQPPK…TGYFTFTLYL (110 aa)) is the Ig-like V-type domain. 3 N-linked (GlcNAc...) asparagine glycosylation sites follow: N61, N104, and N111. The Cell attachment site signature appears at 127–129 (RGD). Ig-like C2-type domains are found at residues 147-234 (PKPS…VTLN) and 242-317 (PRIF…TSLT). Disulfide bonds link C169/C217 and C261/C301.

Belongs to the immunoglobulin superfamily. CEA family.

It is found in the secreted. The sequence is that of Pregnancy-specific beta-1-glycoprotein 11 (PSG11) from Homo sapiens (Human).